We begin with the raw amino-acid sequence, 37 residues long: Large ribosomal subunit protein bL36 (37 aa).

The protein belongs to the bacterial ribosomal protein bL36 family.

The protein is Large ribosomal subunit protein bL36 (rpmJ) of Fusobacterium nucleatum subsp. nucleatum (strain ATCC 25586 / DSM 15643 / BCRC 10681 / CIP 101130 / JCM 8532 / KCTC 2640 / LMG 13131 / VPI 4355).